Here is a 243-residue protein sequence, read N- to C-terminus: Probable 2-phosphosulfolactate phosphatase (243 aa).

It belongs to the ComB family. Mg(2+) is required as a cofactor.

The enzyme catalyses (2R)-O-phospho-3-sulfolactate + H2O = (2R)-3-sulfolactate + phosphate. The chain is Probable 2-phosphosulfolactate phosphatase from Prochlorococcus marinus (strain MIT 9303).